A 359-amino-acid polypeptide reads, in one-letter code: MSSILSRYPEAETPVHGYFYSMVELAVVRVFVQHQIFDAIADDGTSIEELATKTGMELNLLERLSNFLVASKVLSSPKPGFIGLPSETKMFQQRRAKLFYSHIFDAFMGSAVKWPQYLQNNGLAEPQKSNRSPFGLGAGYPDKSFYDVLEMMPERAQAFNSTMAIGLGDMPITGIYDFSWVAAHSGTDPERTLIVDVGGGKGQAIKAIVEETPSIPASACVLQDLPNVIKDVPEEEGILNQVQKVGSSFFDKQPTKGALVYYIRRVLNDWPDDECVTILKNIREACASDSRLLISENLLPDEPSVSLAAADLWMMNFAGKRRNVRMFNDLASRSGFEISSIAKDKTSNSAVIEMLPVQI.

Residues 198–199 (GG), Asp224, 248–249 (SF), Arg264, and Arg265 each bind S-adenosyl-L-methionine.

Belongs to the class I-like SAM-binding methyltransferase superfamily. Cation-independent O-methyltransferase family.

It functions in the pathway mycotoxin biosynthesis. In terms of biological role, methyltransferase; part of the gene cluster that mediates the biosynthesis of HIV-1 integrase inhibitor equisetin and of fusarisetin A, both trans-fused decalin-containing tetramic acids showing also antimicrobial activity. The PKS module of fsa1 together with the enoylreductase fsa3 catalyze the formation of the polyketide unit which is then conjugated to L-serine by the condensation domain of the fsa1 NRPS module. Activity of the Dieckmann cyclase domain (RED) results in release of the Dieckmann product intermediate. Diels-Alderase fsa2 is involved in endo-selective Diels-Alder cycloaddition to form the decalin ring, leading to the production of N-desmethylequisetin also called trichosetin. Subsequent N-methylation is carried out by fsa4 to give equisetin. The enzymatic gene responsible for the conversion of equisetin to fusarisetin A has not been identified yet and is probably located outside of the fsa cluster. This is Methyltransferase fsa4 from Fusarium sp. (strain FN080326).